The chain runs to 137 residues: MKIALIAHDKKKQDMVQFTTAYKDILSHHELYATGTTGLKIQEATGLSVERFQSGPLGGDQQIGALIAANALDLVIFLRDPLTAQPHEPDVSALIRLCDVYAIPLATNMGTAEILVRTLDGGAFDFRNLVRGGEPNV.

The region spanning 1 to 137 (MKIALIAHDK…NLVRGGEPNV (137 aa)) is the MGS-like domain. Substrate contacts are provided by residues His-8, Lys-12, 34-37 (TGTT), and 54-55 (SG). Asp-60 acts as the Proton donor/acceptor in catalysis. His-87 is a substrate binding site.

The protein belongs to the methylglyoxal synthase family.

It carries out the reaction dihydroxyacetone phosphate = methylglyoxal + phosphate. Catalyzes the formation of methylglyoxal from dihydroxyacetone phosphate. This is Methylglyoxal synthase from Bacillus velezensis (strain DSM 23117 / BGSC 10A6 / LMG 26770 / FZB42) (Bacillus amyloliquefaciens subsp. plantarum).